A 201-amino-acid polypeptide reads, in one-letter code: MAALVLSLLLLSLAGHSSASWCVCKTGLSDTVLQATLDYACGNGADCNPTKPKQSCFNPDNVRSHCNYAVNSFFQKKGQSPGSCNFDGTATPTNSDPSYTGCAFPTSASGSSGSTTVTPGTTNPKGSPTTTTLPGSGTNSPYSGNPTNGVFGGNSTGGTTGTGINPDYTTDSSAFALKNSSKLFICLLLIASSGFCSFLML.

The signal sequence occupies residues 1-19 (MAALVLSLLLLSLAGHSSA). Cys22 and Cys84 form a disulfide bridge. The span at 107-141 (SASGSSGSTTVTPGTTNPKGSPTTTTLPGSGTNSP) shows a compositional bias: low complexity. The disordered stretch occupies residues 107 to 164 (SASGSSGSTTVTPGTTNPKGSPTTTTLPGSGTNSPYSGNPTNGVFGGNSTGGTTGTGI). The span at 150–161 (VFGGNSTGGTTG) shows a compositional bias: gly residues. N-linked (GlcNAc...) asparagine glycosylation occurs at Asn154. Ser172 carries GPI-anchor amidated serine lipidation. Positions 173 to 201 (SAFALKNSSKLFICLLLIASSGFCSFLML) are cleaved as a propeptide — removed in mature form. Asn179 is a glycosylation site (N-linked (GlcNAc...) asparagine).

Post-translationally, contains two additional disulfide bonds. Expressed in the shoot apical region and in young leaves but also detected in the laminar and vasculature of mature leaves.

The protein localises to the cell membrane. The protein resides in the cell junction. Its subcellular location is the plasmodesma. Functionally, able to bind (1-&gt;3)-beta-D-glucans (laminarin). Probably involved in cell-to-cell trafficking regulation. The protein is PLASMODESMATA CALLOSE-BINDING PROTEIN 1 (PDCB1) of Arabidopsis thaliana (Mouse-ear cress).